A 333-amino-acid chain; its full sequence is L-lactate dehydrogenase B chain (333 aa).

NAD(+) is bound by residues 29–57 (GQVG…LEDK) and arginine 99. Substrate-binding residues include arginine 106, asparagine 138, and arginine 169. Residue asparagine 138 coordinates NAD(+). The active-site Proton acceptor is histidine 193. Threonine 248 lines the substrate pocket.

It belongs to the LDH/MDH superfamily. LDH family. As to quaternary structure, homotetramer.

It is found in the cytoplasm. The enzyme catalyses (S)-lactate + NAD(+) = pyruvate + NADH + H(+). It participates in fermentation; pyruvate fermentation to lactate; (S)-lactate from pyruvate: step 1/1. In terms of biological role, interconverts simultaneously and stereospecifically pyruvate and lactate with concomitant interconversion of NADH and NAD(+). This is L-lactate dehydrogenase B chain (LDHB) from Anas platyrhynchos (Mallard).